Consider the following 99-residue polypeptide: A-type ATP synthase subunit F (99 aa).

The protein belongs to the V-ATPase F subunit family. As to quaternary structure, has multiple subunits with at least A(3), B(3), C, D, E, F, H, I and proteolipid K(x).

The protein localises to the cell membrane. In terms of biological role, component of the A-type ATP synthase that produces ATP from ADP in the presence of a proton gradient across the membrane. The protein is A-type ATP synthase subunit F of Methanocella arvoryzae (strain DSM 22066 / NBRC 105507 / MRE50).